The following is a 438-amino-acid chain: Dihydroorotase (438 aa).

Zn(2+) is bound by residues histidine 58 and histidine 60. Substrate-binding positions include 60-62 (HLR) and asparagine 92. Zn(2+)-binding residues include aspartate 152, histidine 179, and histidine 232. Substrate is bound at residue asparagine 278. Residue aspartate 305 coordinates Zn(2+). The active site involves aspartate 305. Substrate contacts are provided by residues histidine 309 and 323-324 (FG).

Belongs to the metallo-dependent hydrolases superfamily. DHOase family. Class I DHOase subfamily. It depends on Zn(2+) as a cofactor.

It carries out the reaction (S)-dihydroorotate + H2O = N-carbamoyl-L-aspartate + H(+). It functions in the pathway pyrimidine metabolism; UMP biosynthesis via de novo pathway; (S)-dihydroorotate from bicarbonate: step 3/3. Functionally, catalyzes the reversible cyclization of carbamoyl aspartate to dihydroorotate. In Leifsonia xyli subsp. xyli (strain CTCB07), this protein is Dihydroorotase.